Reading from the N-terminus, the 152-residue chain is MAKLVFISFLVASFCLIGCFGGEAEIKQFWLVRKNAIFQFRFATVEIEKTIYQKVKHILVKAKDDDQKNCIDGVKSEAIIESRAIVKGTVGKILPAIDEVSEALRTGDENKLKAFNNNWNYPEYKVKELANFKLKAAALAPTVQEKLDKCVA.

The first 21 residues, 1-21, serve as a signal peptide directing secretion; that stretch reads MAKLVFISFLVASFCLIGCFG. C70 and C150 are oxidised to a cystine.

It belongs to the insect vpf1 family. Expressed by the venom gland (posterior main gland) (at protein level).

The protein resides in the secreted. The polypeptide is Venom protein family 1 protein 2 (Platymeris rhadamanthus (Red spot assassin bug)).